The sequence spans 570 residues: Proline--tRNA ligase (570 aa).

Belongs to the class-II aminoacyl-tRNA synthetase family. ProS type 1 subfamily. As to quaternary structure, homodimer.

The protein resides in the cytoplasm. It catalyses the reaction tRNA(Pro) + L-proline + ATP = L-prolyl-tRNA(Pro) + AMP + diphosphate. Catalyzes the attachment of proline to tRNA(Pro) in a two-step reaction: proline is first activated by ATP to form Pro-AMP and then transferred to the acceptor end of tRNA(Pro). As ProRS can inadvertently accommodate and process non-cognate amino acids such as alanine and cysteine, to avoid such errors it has two additional distinct editing activities against alanine. One activity is designated as 'pretransfer' editing and involves the tRNA(Pro)-independent hydrolysis of activated Ala-AMP. The other activity is designated 'posttransfer' editing and involves deacylation of mischarged Ala-tRNA(Pro). The misacylated Cys-tRNA(Pro) is not edited by ProRS. The protein is Proline--tRNA ligase of Clostridium perfringens (strain SM101 / Type A).